The following is a 535-amino-acid chain: Serum response factor-binding protein 1 (535 aa).

Coiled-coil stretches lie at residues Leu5–Arg27 and Leu107–Lys177. 6 stretches are compositionally biased toward basic and acidic residues: residues Ala128–Lys151, Lys159–Leu191, Ala205–Val325, Asp361–Tyr376, Ser406–Lys432, and Thr460–Lys472. 2 disordered regions span residues Ala128–Pro435 and Thr453–Asp535.

The protein resides in the cytoplasm. The protein localises to the perinuclear region. May be involved in regulating transcriptional activation of cardiac genes during the aging process. May play a role in biosynthesis and/or processing of SLC2A4 in adipose cells. This Xenopus tropicalis (Western clawed frog) protein is Serum response factor-binding protein 1.